The sequence spans 320 residues: o-succinylbenzoate synthase (320 aa).

Lysine 133 acts as the Proton donor in catalysis. Mg(2+)-binding residues include aspartate 161, glutamate 190, and aspartate 213. Residue lysine 235 is the Proton acceptor of the active site.

Belongs to the mandelate racemase/muconate lactonizing enzyme family. MenC type 1 subfamily. It depends on a divalent metal cation as a cofactor.

It carries out the reaction (1R,6R)-6-hydroxy-2-succinyl-cyclohexa-2,4-diene-1-carboxylate = 2-succinylbenzoate + H2O. It participates in quinol/quinone metabolism; 1,4-dihydroxy-2-naphthoate biosynthesis; 1,4-dihydroxy-2-naphthoate from chorismate: step 4/7. Its pathway is quinol/quinone metabolism; menaquinone biosynthesis. Converts 2-succinyl-6-hydroxy-2,4-cyclohexadiene-1-carboxylate (SHCHC) to 2-succinylbenzoate (OSB). The protein is o-succinylbenzoate synthase of Salmonella newport (strain SL254).